The chain runs to 867 residues: DNA replication licensing factor mcm6 (867 aa).

The tract at residues 51-76 (IDKNNNNNNNEDNEDNNENENEYDEN) is disordered. The span at 61–75 (EDNEDNNENENEYDE) shows a compositional bias: acidic residues. In terms of domain architecture, MCM spans 420-626 (IYQNLVNSIC…ESDHRIAEHI (207 aa)). The ATP site is built by serine 473, threonine 474, lysine 476, serine 477, and asparagine 578. Residues 602 to 605 (SRFD) carry the Arginine finger motif. ADP-binding residues include arginine 693 and glutamate 696.

The protein belongs to the MCM family. In terms of assembly, component of the MCM2-7 complex. The complex forms a toroidal hexameric ring with the proposed subunit order MCM2-MCM6-MCM4-MCM7-MCM3-MCM5 (By simililarity).

It is found in the nucleus. The catalysed reaction is ATP + H2O = ADP + phosphate + H(+). Acts as a component of the MCM2-7 complex (MCM complex) which is the replicative helicase essential for 'once per cell cycle' DNA replication initiation and elongation in eukaryotic cells. Core component of CDC45-MCM-GINS (CMG) helicase, the molecular machine that unwinds template DNA during replication, and around which the replisome is built. The active ATPase sites in the MCM2-7 ring are formed through the interaction surfaces of two neighboring subunits such that a critical structure of a conserved arginine finger motif is provided in trans relative to the ATP-binding site of the Walker A box of the adjacent subunit. The six ATPase active sites, however, are likely to contribute differentially to the complex helicase activity. The chain is DNA replication licensing factor mcm6 (mcm6) from Dictyostelium discoideum (Social amoeba).